Here is a 274-residue protein sequence, read N- to C-terminus: MSRPILVFDSGIGGLSVLAEIRKSLPHSDYCYLFDNARLPYGELEEQVLIAGCVALVCDLVARTNAMIVVVACNTASTVVLPALRANLSIPVVGVVPAIKPAAQMSKSKRIGLLATPGTVKRHYTHELISQFADDCHVELFGCSELVMMAEQKIATGEMDMHRLADLLAPVVAAQLDVLVLGCTHFPMIQAELQQVLGAGVTLMDSGAAIAKRVVTLLTQQNLIVEQRRVTNEREAVGQSAMQAFYTKAEISEGLTTTLIDCGFSTIERITTTN.

Substrate is bound by residues 9-10 and 41-42; these read DS and YG. Residue Cys73 is the Proton donor/acceptor of the active site. 74–75 contacts substrate; it reads NT. Cys183 (proton donor/acceptor) is an active-site residue. 184–185 provides a ligand contact to substrate; sequence TH.

Belongs to the aspartate/glutamate racemases family.

The catalysed reaction is L-glutamate = D-glutamate. The protein operates within cell wall biogenesis; peptidoglycan biosynthesis. In terms of biological role, provides the (R)-glutamate required for cell wall biosynthesis. This chain is Glutamate racemase, found in Shewanella baltica (strain OS185).